The primary structure comprises 218 residues: Protein-L-isoaspartate O-methyltransferase (218 aa).

Serine 60 is a catalytic residue.

The protein belongs to the methyltransferase superfamily. L-isoaspartyl/D-aspartyl protein methyltransferase family.

Its subcellular location is the cytoplasm. The catalysed reaction is [protein]-L-isoaspartate + S-adenosyl-L-methionine = [protein]-L-isoaspartate alpha-methyl ester + S-adenosyl-L-homocysteine. Functionally, catalyzes the methyl esterification of L-isoaspartyl residues in peptides and proteins that result from spontaneous decomposition of normal L-aspartyl and L-asparaginyl residues. It plays a role in the repair and/or degradation of damaged proteins. In Roseiflexus sp. (strain RS-1), this protein is Protein-L-isoaspartate O-methyltransferase.